Consider the following 387-residue polypeptide: Protein kinase ORF16 (387 aa).

The region spanning 82-381 (KKILSRVGPE…VTLMTELSLL (300 aa)) is the Protein kinase domain. Lysine 122 contributes to the ATP binding site. Aspartate 226 acts as the Proton acceptor in catalysis.

Belongs to the protein kinase superfamily. Ser/Thr protein kinase family.

It carries out the reaction L-seryl-[protein] + ATP = O-phospho-L-seryl-[protein] + ADP + H(+). The catalysed reaction is L-threonyl-[protein] + ATP = O-phospho-L-threonyl-[protein] + ADP + H(+). In Ictalurid herpesvirus 1 (strain Auburn) (IcHV-1), this protein is Protein kinase ORF16 (ORF16).